The chain runs to 316 residues: UPF0761 membrane protein PM1616 (316 aa).

6 consecutive transmembrane segments (helical) span residues 36–56 (MLAL…FPVF), 92–112 (QMSA…INSI), 128–148 (LVFS…LIGA), 172–192 (ILSF…YTVV), 204–224 (IGAL…LWYV), and 236–256 (AMAT…VILI).

It belongs to the UPF0761 family.

The protein localises to the cell inner membrane. In Pasteurella multocida (strain Pm70), this protein is UPF0761 membrane protein PM1616.